The primary structure comprises 317 residues: Transcription cofactor vestigial-like protein 2 (317 aa).

Disordered stretches follow at residues 41-76 (CNAS…ERPP), 108-128 (SQPS…SSGP), 191-214 (TEPW…GGAL), and 253-293 (RLAT…PSGD). Over residues 44–57 (SPSSSGSGSSSFSS) the composition is skewed to low complexity. Positions 63-76 (IKEEEGSPEKERPP) are enriched in basic and acidic residues. Over residues 108–120 (SQPSSYSPSCTSS) the composition is skewed to low complexity. A compositionally biased stretch (basic residues) spans 196–206 (HAHPHHAHPHH). Residues 272 to 292 (KGEPAGAAWAGPGGPFASPSG) are compositionally biased toward low complexity.

Belongs to the vestigial family. In terms of assembly, interacts with TEFs. Binds to TEAD1/TEF1. In terms of tissue distribution, skeletal muscle.

Its subcellular location is the nucleus. Functionally, may act as a specific coactivator for the mammalian TEFs. May play a role in the development of skeletal muscles. In Homo sapiens (Human), this protein is Transcription cofactor vestigial-like protein 2 (VGLL2).